The following is a 106-amino-acid chain: UPF0145 protein Csac_0771 (106 aa).

This sequence belongs to the UPF0145 family.

The chain is UPF0145 protein Csac_0771 from Caldicellulosiruptor saccharolyticus (strain ATCC 43494 / DSM 8903 / Tp8T 6331).